The sequence spans 391 residues: Alkanesulfonate monooxygenase (391 aa).

The protein belongs to the SsuD family.

The catalysed reaction is an alkanesulfonate + FMNH2 + O2 = an aldehyde + FMN + sulfite + H2O + 2 H(+). Its function is as follows. Catalyzes the desulfonation of aliphatic sulfonates. The sequence is that of Alkanesulfonate monooxygenase from Paracidovorax citrulli (strain AAC00-1) (Acidovorax citrulli).